The primary structure comprises 548 residues: T-complex protein 1 subunit theta (548 aa).

Ala2 carries the N-acetylalanine modification. Position 23 is a phosphoserine (Ser23). Tyr30 carries the post-translational modification Phosphotyrosine. ADP-binding residues include Tyr47 and Gly48. Position 99 (Asp99) interacts with Mg(2+). ADP-binding residues include Gly100, Thr101, Asn102, and Phe103. Residues Gly100, Thr101, and Asn102 each coordinate ATP. Ser162 carries the post-translational modification Phosphoserine. Residues Met169, Ser170, and Lys171 each contribute to the ADP site. ATP contacts are provided by Ser170 and Lys171. Residue Ser213 is modified to Phosphoserine. Glycyl lysine isopeptide (Lys-Gly) (interchain with G-Cter in SUMO2) cross-links involve residues Lys224, Lys254, and Lys260. Phosphoserine occurs at positions 269 and 317. N6-acetyllysine occurs at positions 318 and 400. Position 412 (Gly412) interacts with ADP. Gly412 contributes to the ATP binding site. Lys459 participates in a covalent cross-link: Glycyl lysine isopeptide (Lys-Gly) (interchain with G-Cter in SUMO1). An N6-acetyllysine modification is found at Lys466. Asp499 contacts ADP. Residues Asp499 and Lys504 each contribute to the ATP site. Tyr505 carries the phosphotyrosine modification. A disordered region spans residues 529–548 (PAGGPKPPSGKKDWDDDQND). A Glycyl lysine isopeptide (Lys-Gly) (interchain with G-Cter in SUMO2) cross-link involves residue Lys534. Ser537 carries the phosphoserine modification. A Glycyl lysine isopeptide (Lys-Gly) (interchain with G-Cter in SUMO2) cross-link involves residue Lys539.

The protein belongs to the TCP-1 chaperonin family. Component of the chaperonin-containing T-complex (TRiC), a hexadecamer composed of two identical back-to-back stacked rings enclosing a protein folding chamber. Each ring is made up of eight different subunits: TCP1/CCT1, CCT2, CCT3, CCT4, CCT5, CCT6A/CCT6, CCT7, CCT8. Interacts with PACRG. Interacts with DNAAF4. Interacts with synaptic plasticity regulator PANTS.

It is found in the cytoplasm. It localises to the cytoskeleton. Its subcellular location is the microtubule organizing center. The protein localises to the centrosome. The protein resides in the cilium basal body. It catalyses the reaction ATP + H2O = ADP + phosphate + H(+). In terms of biological role, component of the chaperonin-containing T-complex (TRiC), a molecular chaperone complex that assists the folding of actin, tubulin and other proteins upon ATP hydrolysis. The TRiC complex mediates the folding of WRAP53/TCAB1, thereby regulating telomere maintenance. As part of the TRiC complex may play a role in the assembly of BBSome, a complex involved in ciliogenesis regulating transports vesicles to the cilia. The polypeptide is T-complex protein 1 subunit theta (CCT8) (Macaca fascicularis (Crab-eating macaque)).